A 377-amino-acid polypeptide reads, in one-letter code: Queuine tRNA-ribosyltransferase (377 aa).

The active-site Proton acceptor is the aspartate 93. Substrate-binding positions include 93-97 (DSGGF), aspartate 147, glutamine 190, and glycine 216. The RNA binding stretch occupies residues 247–253 (GVGTPDD). Aspartate 266 acts as the Nucleophile in catalysis. The segment at 271–275 (TRAGR) is RNA binding; important for wobble base 34 recognition. Zn(2+) contacts are provided by cysteine 304, cysteine 306, cysteine 309, and histidine 335.

Belongs to the queuine tRNA-ribosyltransferase family. In terms of assembly, homodimer. Within each dimer, one monomer is responsible for RNA recognition and catalysis, while the other monomer binds to the replacement base PreQ1. It depends on Zn(2+) as a cofactor.

The enzyme catalyses 7-aminomethyl-7-carbaguanine + guanosine(34) in tRNA = 7-aminomethyl-7-carbaguanosine(34) in tRNA + guanine. It participates in tRNA modification; tRNA-queuosine biosynthesis. In terms of biological role, catalyzes the base-exchange of a guanine (G) residue with the queuine precursor 7-aminomethyl-7-deazaguanine (PreQ1) at position 34 (anticodon wobble position) in tRNAs with GU(N) anticodons (tRNA-Asp, -Asn, -His and -Tyr). Catalysis occurs through a double-displacement mechanism. The nucleophile active site attacks the C1' of nucleotide 34 to detach the guanine base from the RNA, forming a covalent enzyme-RNA intermediate. The proton acceptor active site deprotonates the incoming PreQ1, allowing a nucleophilic attack on the C1' of the ribose to form the product. After dissociation, two additional enzymatic reactions on the tRNA convert PreQ1 to queuine (Q), resulting in the hypermodified nucleoside queuosine (7-(((4,5-cis-dihydroxy-2-cyclopenten-1-yl)amino)methyl)-7-deazaguanosine). In Granulibacter bethesdensis (strain ATCC BAA-1260 / CGDNIH1), this protein is Queuine tRNA-ribosyltransferase.